A 253-amino-acid chain; its full sequence is 5'-nucleotidase SurE (253 aa).

The a divalent metal cation site is built by Asp8, Asp9, Ser39, and Asn95.

The protein belongs to the SurE nucleotidase family. A divalent metal cation is required as a cofactor.

It localises to the cytoplasm. It catalyses the reaction a ribonucleoside 5'-phosphate + H2O = a ribonucleoside + phosphate. In terms of biological role, nucleotidase that shows phosphatase activity on nucleoside 5'-monophosphates. In Chloroflexus aggregans (strain MD-66 / DSM 9485), this protein is 5'-nucleotidase SurE.